The chain runs to 501 residues: Splicing factor ESS-2 homolog (501 aa).

Low complexity-rich tracts occupy residues 1–18 and 105–115; these read MSAT…GTPG and ISGTGRSTSRR. Disordered regions lie at residues 1-20 and 105-163; these read MSAT…PGSL and ISGT…GRDT. Residues 126 to 151 show a composition bias toward polar residues; that stretch reads TPVSQAKCSNTPLPNSRATDTPFSTD. The segment covering 152–163 has biased composition (basic and acidic residues); it reads GSEKSDAEGRDT. Phosphoserine occurs at positions 409 and 411. Residues 425–471 are disordered; the sequence is RGTPRLRHTPSPMSGRKRKVTPGVVRSTNTPILGEPKPKQQAKISTP.

It belongs to the ESS2 family.

It localises to the nucleus. The protein is Splicing factor ESS-2 homolog (Es2) of Drosophila melanogaster (Fruit fly).